A 614-amino-acid polypeptide reads, in one-letter code: DNA mismatch repair protein MutL (614 aa).

This sequence belongs to the DNA mismatch repair MutL/HexB family.

Its function is as follows. This protein is involved in the repair of mismatches in DNA. It is required for dam-dependent methyl-directed DNA mismatch repair. May act as a 'molecular matchmaker', a protein that promotes the formation of a stable complex between two or more DNA-binding proteins in an ATP-dependent manner without itself being part of a final effector complex. The protein is DNA mismatch repair protein MutL of Thermoanaerobacter sp. (strain X514).